Here is a 730-residue protein sequence, read N- to C-terminus: Catalase-peroxidase (730 aa).

A cross-link (tryptophyl-tyrosyl-methioninium (Trp-Tyr) (with M-244)) is located at residues 95 to 218 (WHSAGTYRVG…LAAVQMGLIY (124 aa)). Catalysis depends on H96, which acts as the Proton acceptor. The tryptophyl-tyrosyl-methioninium (Tyr-Met) (with W-95) cross-link spans 218 to 244 (YVNPEGPNGNPDPLGSAHDVRETFARM). H259 lines the heme b pocket.

It belongs to the peroxidase family. Peroxidase/catalase subfamily. Homodimer or homotetramer. It depends on heme b as a cofactor. In terms of processing, formation of the three residue Trp-Tyr-Met cross-link is important for the catalase, but not the peroxidase activity of the enzyme.

The catalysed reaction is H2O2 + AH2 = A + 2 H2O. It carries out the reaction 2 H2O2 = O2 + 2 H2O. Bifunctional enzyme with both catalase and broad-spectrum peroxidase activity. This is Catalase-peroxidase from Clostridium botulinum (strain Eklund 17B / Type B).